We begin with the raw amino-acid sequence, 332 residues long: Myogenic-determination protein (332 aa).

Residues 22–54 (HNGYGQPTHPGYGFSAYSQQNPIAHPGQNPHQT) are disordered. The 52-residue stretch at 161-212 (DRRKAATMRERRRLRKVNEAFEILKRRTSSNPNQRLPKVEILRNAIEYIESL) folds into the bHLH domain. A compositionally biased stretch (polar residues) spans 293-309 (TTSPIQNKATPSASDTQ). Residues 293–332 (TTSPIQNKATPSASDTQSPPSSGATAPTSLHVNFKRKCST) are disordered. A compositionally biased stretch (low complexity) spans 310–321 (SPPSSGATAPTS).

In terms of assembly, efficient DNA binding requires dimerization with another bHLH protein.

The protein localises to the nucleus. Functionally, may play an important role in the early development of muscle. The chain is Myogenic-determination protein (nau) from Drosophila melanogaster (Fruit fly).